Consider the following 235-residue polypeptide: Large ribosomal subunit protein uL1 (235 aa).

The protein belongs to the universal ribosomal protein uL1 family. Part of the 50S ribosomal subunit.

Binds directly to 23S rRNA. The L1 stalk is quite mobile in the ribosome, and is involved in E site tRNA release. Functionally, protein L1 is also a translational repressor protein, it controls the translation of the L11 operon by binding to its mRNA. The chain is Large ribosomal subunit protein uL1 from Mycobacterium tuberculosis (strain ATCC 25177 / H37Ra).